The primary structure comprises 626 residues: Basic helix-loop-helix ARNT-like protein 1 (626 aa).

The segment at 1 to 60 (MADQRMDISSTISDFMSPGPTDLLSSSLGTSGVDCNRKRKGSSTDYQESMDTDKDDPHGR) is disordered. A Phosphoserine; by GSK3-beta modification is found at Ser17. Positions 17–32 (SPGPTDLLSSSLGTSG) are enriched in low complexity. A Phosphothreonine; by GSK3-beta modification is found at Thr21. The Nuclear localization signal motif lies at 36–41 (NRKRKG). A compositionally biased stretch (basic and acidic residues) spans 51–60 (DTDKDDPHGR). One can recognise a bHLH domain in the interval 72–125 (NAREAHSQIEKRRRDKMNSFIDELASLVPTCNAMSRKLDKLTVLRMAVQHMKTL). A Phosphoserine modification is found at Ser78. Ser90 carries the phosphoserine; by CK2 modification. Positions 142–152 (LSDDELKHLIL) match the Nuclear export signal 1 motif. One can recognise a PAS 1 domain in the interval 143–215 (SDDELKHLIL…EQLSSSDTAP (73 aa)). A Glycyl lysine isopeptide (Lys-Gly) (interchain with G-Cter in SUMO2 and SUMO3) cross-link involves residue Lys252. A Glycyl lysine isopeptide (Lys-Gly) (interchain with G-Cter in SUMO2) cross-link involves residue Lys259. Residues 326–396 (PQPVNGEIRV…ECHRQVLQTR (71 aa)) form the PAS 2 domain. The Nuclear export signal 2 motif lies at 361–369 (LAYLPQELL). One can recognise a PAC domain in the interval 401 to 444 (TNCYKFKIKDGSFITLRSRWFSFMNPWTKEVEYIVSTNTVVLAN). 2 disordered regions span residues 458-493 (ASPHSMDSMLPSGEGGPKRTHPTVPGIPGGTRAGAG) and 511-595 (GSSP…SPSN). Residues 484-493 (IPGGTRAGAG) are compositionally biased toward gly residues. The interval 508–588 (RIRGSSPSSC…IGIDMIDNDQ (81 aa)) is interaction with CIART. A compositionally biased stretch (low complexity) spans 511-521 (GSSPSSCGSSP). The residue at position 538 (Lys538) is an N6-acetyllysine.

Component of the circadian clock oscillator which includes the CRY1/2 proteins, CLOCK or NPAS2,BMAL1 or BMAL2, CSNK1D and/or CSNK1E, TIMELESS and the PER1/2/3 proteins. Forms a heterodimer with CLOCK. The CLOCK-BMAL1 heterodimer is required for E-box-dependent transactivation, for CLOCK nuclear translocation and degradation, and, for phosphorylation of both CLOCK and BMAL1. Part of a nuclear complex which also includes RACK1 and PRKCA; RACK1 and PRKCA are recruited to the complex in a circadian manner. Interacts with NPAS2. Interacts with EZH2. Interacts with SUMO3. Interacts with SIRT1. Interacts with AHR. Interacts with ID1, ID2 and ID3. Interacts with DDX4. Interacts with OGT. Interacts with EED and SUZ12. Interacts with MTA1. Interacts with CIART. Interacts with HSP90. Interacts with KAT2B and EP300. Interacts with BHLHE40/DEC1 and BHLHE41/DEC2. Interacts with RELB and the interaction is enhanced in the presence of CLOCK. Interacts with PER1, PER2, CRY1 and CRY2 and this interaction requires a translocation to the nucleus. Interaction of the CLOCK-BMAL1 heterodimer with PER or CRY inhibits transcription activation. Interaction of the CLOCK-BMAL1 with CRY1 is independent of DNA but with PER2 is off DNA. The CLOCK-BMAL1 heterodimer interacts with GSK3B. Interacts with KDM5A. Interacts with KMT2A; in a circadian manner. Interacts with UBE3A. Interacts with PRKCG. Interacts with MAGEL2. Interacts with NCOA2. Interacts with THRAP3. The CLOCK-BMAL1 heterodimer interacts with PASD1. Interacts with PASD1. Interacts with USP9X. Interacts with PIWIL2 (via PIWI domain). Interacts with HDAC3. Interacts with HNF4A. Post-translationally, ubiquitinated, leading to its proteasomal degradation. Deubiquitinated by USP9X. O-glycosylated; contains O-GlcNAc. O-glycosylation by OGT prevents protein degradation by inhibiting ubiquitination. It also stabilizes the CLOCK-BMAL1 heterodimer thereby increasing CLOCK-BMAL1-mediated transcription of genes in the negative loop of the circadian clock such as PER1/2/3 and CRY1/2. In terms of processing, acetylated on Lys-538 by CLOCK during the repression phase of the circadian cycle. Acetylation facilitates recruitment of CRY1 protein and initiates the repression phase of the circadian cycle. Acetylated at Lys-538 by KAT5 during the activation phase of the cycle, leading to recruitment of the positive transcription elongation factor b (P-TEFb) and BRD4, followed by productive elongation of circadian transcripts. Deacetylated by SIRT1, which may result in decreased protein stability. Post-translationally, phosphorylated upon dimerization with CLOCK. Phosphorylation enhances the transcriptional activity, alters the subcellular localization and decreases the stability of the CLOCK-BMAL1 heterodimer by promoting its degradation. Phosphorylation shows circadian variations in the liver with a peak between CT10 to CT14. Phosphorylation at Ser-90 by CK2 is essential for its nuclear localization, its interaction with CLOCK and controls CLOCK nuclear entry. Dephosphorylation at Ser-78 is important for dimerization with CLOCK and transcriptional activity. Sumoylated on Lys-259 upon dimerization with CLOCK. Predominantly conjugated to poly-SUMO2/3 rather than SUMO1 and the level of these conjugates undergo rhythmic variation, peaking at CT9-CT12. Sumoylation localizes it exclusively to the PML body and promotes its ubiquitination in the PML body, ubiquitin-dependent proteasomal degradation and the transcriptional activity of the CLOCK-BMAL1 heterodimer. In terms of processing, undergoes lysosome-mediated degradation in a time-dependent manner in the liver. In terms of tissue distribution, hair follicles (at protein level). Highly expressed in the adult brain, skeletal muscle and heart.

It is found in the nucleus. The protein resides in the cytoplasm. The protein localises to the PML body. There is conflicting data about the effect of NAD cofactors on activity. PubMed:11441146 suggests that the redox state of the cell can modulate the transcriptional activity of the CLOCK-BMAL1 heterodimer; NADH and NADPH enhance the DNA-binding activity of the heterodimer. PubMed:23229515 reports that NADH and NADPH have no significant effect on DNA-binding activity of the CLOCK-BMAL1 heterodimer. Its function is as follows. Transcriptional activator which forms a core component of the circadian clock. The circadian clock, an internal time-keeping system, regulates various physiological processes through the generation of approximately 24 hour circadian rhythms in gene expression, which are translated into rhythms in metabolism and behavior. It is derived from the Latin roots 'circa' (about) and 'diem' (day) and acts as an important regulator of a wide array of physiological functions including metabolism, sleep, body temperature, blood pressure, endocrine, immune, cardiovascular, and renal function. Consists of two major components: the central clock, residing in the suprachiasmatic nucleus (SCN) of the brain, and the peripheral clocks that are present in nearly every tissue and organ system. Both the central and peripheral clocks can be reset by environmental cues, also known as Zeitgebers (German for 'timegivers'). The predominant Zeitgeber for the central clock is light, which is sensed by retina and signals directly to the SCN. The central clock entrains the peripheral clocks through neuronal and hormonal signals, body temperature and feeding-related cues, aligning all clocks with the external light/dark cycle. Circadian rhythms allow an organism to achieve temporal homeostasis with its environment at the molecular level by regulating gene expression to create a peak of protein expression once every 24 hours to control when a particular physiological process is most active with respect to the solar day. Transcription and translation of core clock components (CLOCK, NPAS2, BMAL1, BMAL2, PER1, PER2, PER3, CRY1 and CRY2) plays a critical role in rhythm generation, whereas delays imposed by post-translational modifications (PTMs) are important for determining the period (tau) of the rhythms (tau refers to the period of a rhythm and is the length, in time, of one complete cycle). A diurnal rhythm is synchronized with the day/night cycle, while the ultradian and infradian rhythms have a period shorter and longer than 24 hours, respectively. Disruptions in the circadian rhythms contribute to the pathology of cardiovascular diseases, cancer, metabolic syndromes and aging. A transcription/translation feedback loop (TTFL) forms the core of the molecular circadian clock mechanism. Transcription factors, CLOCK or NPAS2 and BMAL1 or BMAL2, form the positive limb of the feedback loop, act in the form of a heterodimer and activate the transcription of core clock genes and clock-controlled genes (involved in key metabolic processes), harboring E-box elements (5'-CACGTG-3') within their promoters. The core clock genes: PER1/2/3 and CRY1/2 which are transcriptional repressors form the negative limb of the feedback loop and interact with the CLOCK|NPAS2-BMAL1|BMAL2 heterodimer inhibiting its activity and thereby negatively regulating their own expression. This heterodimer also activates nuclear receptors NR1D1/2 and RORA/B/G, which form a second feedback loop and which activate and repress BMAL1 transcription, respectively. BMAL1 positively regulates myogenesis and negatively regulates adipogenesis via the transcriptional control of the genes of the canonical Wnt signaling pathway. Plays a role in normal pancreatic beta-cell function; regulates glucose-stimulated insulin secretion via the regulation of antioxidant genes NFE2L2/NRF2 and its targets SESN2, PRDX3, CCLC and CCLM. Negatively regulates the mTORC1 signaling pathway; regulates the expression of MTOR and DEPTOR. Controls diurnal oscillations of Ly6C inflammatory monocytes; rhythmic recruitment of the PRC2 complex imparts diurnal variation to chemokine expression that is necessary to sustain Ly6C monocyte rhythms. Regulates the expression of HSD3B2, STAR, PTGS2, CYP11A1, CYP19A1 and LHCGR in the ovary and also the genes involved in hair growth. Plays an important role in adult hippocampal neurogenesis by regulating the timely entry of neural stem/progenitor cells (NSPCs) into the cell cycle and the number of cell divisions that take place prior to cell-cycle exit. Regulates the circadian expression of CIART and KLF11. The CLOCK-BMAL1 heterodimer regulates the circadian expression of SERPINE1/PAI1, VWF, B3, CCRN4L/NOC, NAMPT, DBP, MYOD1, PPARGC1A, PPARGC1B, SIRT1, GYS2, F7, NGFR, GNRHR, BHLHE40/DEC1, ATF4, MTA1, KLF10 and also genes implicated in glucose and lipid metabolism. Promotes rhythmic chromatin opening, regulating the DNA accessibility of other transcription factors. The NPAS2-BMAL1 heterodimer positively regulates the expression of MAOA, F7 and LDHA and modulates the circadian rhythm of daytime contrast sensitivity by regulating the rhythmic expression of adenylate cyclase type 1 (ADCY1) in the retina. The preferred binding motif for the CLOCK-BMAL1 heterodimer is 5'-CACGTGA-3', which contains a flanking adenine nucleotide at the 3-prime end of the canonical 6-nucleotide E-box sequence. CLOCK specifically binds to the half-site 5'-CAC-3', while BMAL1 binds to the half-site 5'-GTGA-3'. The CLOCK-BMAL1 heterodimer also recognizes the non-canonical E-box motifs 5'-AACGTGA-3' and 5'-CATGTGA-3'. Essential for the rhythmic interaction of CLOCK with ASS1 and plays a critical role in positively regulating CLOCK-mediated acetylation of ASS1. Plays a role in protecting against lethal sepsis by limiting the expression of immune checkpoint protein CD274 in macrophages in a PKM2-dependent manner. Regulates the diurnal rhythms of skeletal muscle metabolism via transcriptional activation of genes promoting triglyceride synthesis (DGAT2) and metabolic efficiency (COQ10B). In terms of biological role, (Microbial infection) Regulates SARS coronavirus-2/SARS-CoV-2 entry and replication in lung epithelial cells probably through the post-transcriptional regulation of ACE2 and interferon-stimulated gene expression. The protein is Basic helix-loop-helix ARNT-like protein 1 of Homo sapiens (Human).